We begin with the raw amino-acid sequence, 241 residues long: Probable transcriptional regulatory protein AZOSEA20720 (241 aa).

Residues 1–21 (MAGHSKWANIQHRKGRQDAKR) are disordered.

It belongs to the TACO1 family.

The protein localises to the cytoplasm. This chain is Probable transcriptional regulatory protein AZOSEA20720, found in Aromatoleum aromaticum (strain DSM 19018 / LMG 30748 / EbN1) (Azoarcus sp. (strain EbN1)).